A 173-amino-acid chain; its full sequence is U1 small nuclear ribonucleoprotein C (173 aa).

The segment at 4–36 (YYCDYCDTYLTHDSPSVRKTHCQGRKHKDNVKF) adopts a Matrin-type zinc-finger fold. The tract at residues 72 to 100 (AAIPPPANMQGPPRPVPPGPMGPGPNMLG) is disordered. Positions 73-94 (AIPPPANMQGPPRPVPPGPMGP) are enriched in pro residues.

Belongs to the U1 small nuclear ribonucleoprotein C family. In terms of assembly, U1 snRNP is composed of the 7 core Sm proteins B/B', D1, D2, D3, E, F and G that assemble in a heptameric protein ring on the Sm site of the small nuclear RNA to form the core snRNP, and at least 3 U1 snRNP-specific proteins U1-70K, U1-A and U1-C. U1-C interacts with U1 snRNA and the 5' splice-site region of the pre-mRNA.

Its subcellular location is the nucleus. Functionally, component of the spliceosomal U1 snRNP, which is essential for recognition of the pre-mRNA 5' splice-site and the subsequent assembly of the spliceosome. U1-C is directly involved in initial 5' splice-site recognition for both constitutive and regulated alternative splicing. The interaction with the 5' splice-site seems to precede base-pairing between the pre-mRNA and the U1 snRNA. Stimulates commitment or early (E) complex formation by stabilizing the base pairing of the 5' end of the U1 snRNA and the 5' splice-site region. This Pediculus humanus subsp. corporis (Body louse) protein is U1 small nuclear ribonucleoprotein C.